The following is a 230-amino-acid chain: Cytidylate kinase (230 aa).

An ATP-binding site is contributed by 12–20 (GPSGAGKGT).

The protein belongs to the cytidylate kinase family. Type 1 subfamily.

The protein resides in the cytoplasm. It catalyses the reaction CMP + ATP = CDP + ADP. It carries out the reaction dCMP + ATP = dCDP + ADP. This is Cytidylate kinase from Aeromonas salmonicida (strain A449).